Here is a 79-residue protein sequence, read N- to C-terminus: uncharacterized protein (79 aa).

It belongs to the asfivirus D79L family.

This is an uncharacterized protein from Ornithodoros (relapsing fever ticks).